Here is a 1429-residue protein sequence, read N- to C-terminus: DNA-directed RNA polymerase subunit beta' (1429 aa).

The Zn(2+) site is built by cysteine 68, cysteine 70, cysteine 83, and cysteine 86. The Mg(2+) site is built by aspartate 459, aspartate 461, and aspartate 463. Cysteine 805, cysteine 879, cysteine 886, and cysteine 889 together coordinate Zn(2+). The disordered stretch occupies residues 1407-1429 (ESFPLLGGDGEPASTTSSTTEGE). Positions 1419–1429 (ASTTSSTTEGE) are enriched in polar residues.

It belongs to the RNA polymerase beta' chain family. The RNAP catalytic core consists of 2 alpha, 1 beta, 1 beta' and 1 omega subunit. When a sigma factor is associated with the core the holoenzyme is formed, which can initiate transcription. The cofactor is Mg(2+). It depends on Zn(2+) as a cofactor.

It carries out the reaction RNA(n) + a ribonucleoside 5'-triphosphate = RNA(n+1) + diphosphate. DNA-dependent RNA polymerase catalyzes the transcription of DNA into RNA using the four ribonucleoside triphosphates as substrates. This is DNA-directed RNA polymerase subunit beta' from Rhodopirellula baltica (strain DSM 10527 / NCIMB 13988 / SH1).